Here is a 393-residue protein sequence, read N- to C-terminus: Epoxyqueuosine reductase (393 aa).

Residue Asp154 is the Proton donor of the active site. A 4Fe-4S ferredoxin-type domain is found at Leu196 to Thr228. Positions 208, 211, 214, 218, 234, 261, 264, and 268 each coordinate [4Fe-4S] cluster.

This sequence belongs to the QueG family. As to quaternary structure, monomer. Requires cob(II)alamin as cofactor. [4Fe-4S] cluster serves as cofactor.

The protein localises to the cytoplasm. The catalysed reaction is epoxyqueuosine(34) in tRNA + AH2 = queuosine(34) in tRNA + A + H2O. It functions in the pathway tRNA modification; tRNA-queuosine biosynthesis. Functionally, catalyzes the conversion of epoxyqueuosine (oQ) to queuosine (Q), which is a hypermodified base found in the wobble positions of tRNA(Asp), tRNA(Asn), tRNA(His) and tRNA(Tyr). In Shewanella oneidensis (strain ATCC 700550 / JCM 31522 / CIP 106686 / LMG 19005 / NCIMB 14063 / MR-1), this protein is Epoxyqueuosine reductase.